Consider the following 1441-residue polypeptide: Gag-Pol polyprotein (1441 aa).

Gly2 carries N-myristoyl glycine; by host lipidation. Positions 7–31 (VLSGGELDRWENIRLRPGGKKKYKL) are interaction with Gp41. Residues 8-43 (LSGGELDRWENIRLRPGGKKKYKLKHVVWASRELER) form an interaction with host CALM1 region. Residues 12-19 (ELDRWENI) are interaction with host AP3D1. The tract at residues 14-33 (DRWENIRLRPGGKKKYKLKH) is interaction with membrane phosphatidylinositol 4,5-bisphosphate and RNA. The short motif at 16–22 (WENIRLR) is the Nuclear export signal element. The Nuclear localization signal signature appears at 26–32 (KKKYKLK). Residues 73 to 77 (EELKS) are interaction with membrane phosphatidylinositol 4,5-bisphosphate. A disordered region spans residues 106–131 (EEQNKSKKKAQQAAADTGNRGNSSQV). Tyr135 is modified (phosphotyrosine; by host). The interaction with human PPIA/CYPA and NUP153 stretch occupies residues 192–230 (NTVGGHQAAMQMLKETINEEAAEWDRLHPVHAGPITPGQ). A dimerization/Multimerization of capsid protein p24 region spans residues 280 to 366 (YSPSSILDIR…GGPGHKARVL (87 aa)). 2 consecutive CCHC-type zinc fingers follow at residues 393-410 (IKCF…NCRA) and 414-431 (RGCW…DCTE). Residues 451–460 (SSEQNRANSP) show a composition bias toward polar residues. The disordered stretch occupies residues 451 to 489 (SSEQNRANSPTRRELQVWGRDNNSLSEAGEEAGDDRQGP). The tract at residues 495 to 499 (PQITL) is dimerization of protease. The 70-residue stretch at 514–583 (KEALLDTGAD…TPVNIIGRNL (70 aa)) folds into the Peptidase A2 domain. Asp519 functions as the For protease activity; shared with dimeric partner in the catalytic mechanism. 2 dimerization of protease regions span residues 543-549 (GIGGFIK) and 582-594 (NLLT…LNFP). A Reverse transcriptase domain is found at 637–827 (EGKISKIGPE…PPFLWMGYEL (191 aa)). Mg(2+)-binding residues include Asp703, Asp778, and Asp779. Residues 820 to 828 (FLWMGYELH) form an RT 'primer grip' region. Residues 991–1007 (WETWWTEYTXATWIPEW) carry the Tryptophan repeat motif motif. An RNase H type-1 domain is found at 1027-1150 (IVGAETFYVD…VDKLVSAGIR (124 aa)). Mg(2+) is bound by residues Asp1036, Glu1071, Asp1091, and Asp1142. The Integrase-type zinc-finger motif lies at 1156–1197 (DGIDKAQEDHEKYHSNWRAMASDFNLPPIVAKEIVASCDKCQ). Residues His1165, His1169, Cys1193, and Cys1196 each coordinate Zn(2+). One can recognise an Integrase catalytic domain in the interval 1207-1357 (VDCSPGIWQL…SAGERIVGII (151 aa)). Residues Asp1217, Asp1269, and Glu1305 each coordinate Mg(2+). A DNA-binding region (integrase-type) is located at residues 1376-1423 (FRVYYRDSRDPLWKGPAKLLWKGEGAVVIQDNNDIKVVPRRKAKVIRD).

In terms of assembly, homotrimer; further assembles as hexamers of trimers. Interacts with gp41 (via C-terminus). Interacts with host CALM1; this interaction induces a conformational change in the Matrix protein, triggering exposure of the myristate group. Interacts with host AP3D1; this interaction allows the polyprotein trafficking to multivesicular bodies during virus assembly. Part of the pre-integration complex (PIC) which is composed of viral genome, matrix protein, Vpr and integrase. Homodimer; the homodimer further multimerizes as homohexamers or homopentamers. Interacts with human PPIA/CYPA; This interaction stabilizes the capsid. Interacts with human NUP153. Interacts with host PDZD8; this interaction stabilizes the capsid. Interacts with monkey TRIM5; this interaction destabilizes the capsid. As to quaternary structure, homodimer, whose active site consists of two apposed aspartic acid residues. In terms of assembly, heterodimer of p66 RT and p51 RT (RT p66/p51). Heterodimerization of RT is essential for DNA polymerase activity. The overall folding of the subdomains is similar in p66 RT and p51 RT but the spatial arrangements of the subdomains are dramatically different. Homotetramer; may further associate as a homohexadecamer. Part of the pre-integration complex (PIC) which is composed of viral genome, matrix protein, Vpr and integrase. Interacts with human SMARCB1/INI1 and human PSIP1/LEDGF isoform 1. Interacts with human KPNA3; this interaction might play a role in nuclear import of the pre-integration complex. Interacts with human NUP153; this interaction might play a role in nuclear import of the pre-integration complex. Mg(2+) is required as a cofactor. Post-translationally, specific enzymatic cleavages by the viral protease yield mature proteins. The protease is released by autocatalytic cleavage. The polyprotein is cleaved during and after budding, this process is termed maturation. Proteolytic cleavage of p66 RT removes the RNase H domain to yield the p51 RT subunit. Nucleocapsid protein p7 might be further cleaved after virus entry. In terms of processing, tyrosine phosphorylated presumably in the virion by a host kinase. Phosphorylation is apparently not a major regulator of membrane association. Phosphorylated possibly by host MAPK1; this phosphorylation is necessary for Pin1-mediated virion uncoating. Post-translationally, methylated by host PRMT6, impairing its function by reducing RNA annealing and the initiation of reverse transcription.

The protein localises to the host cell membrane. Its subcellular location is the host endosome. It localises to the host multivesicular body. It is found in the virion membrane. The protein resides in the host nucleus. The protein localises to the host cytoplasm. Its subcellular location is the virion. The enzyme catalyses Specific for a P1 residue that is hydrophobic, and P1' variable, but often Pro.. It catalyses the reaction Endohydrolysis of RNA in RNA/DNA hybrids. Three different cleavage modes: 1. sequence-specific internal cleavage of RNA. Human immunodeficiency virus type 1 and Moloney murine leukemia virus enzymes prefer to cleave the RNA strand one nucleotide away from the RNA-DNA junction. 2. RNA 5'-end directed cleavage 13-19 nucleotides from the RNA end. 3. DNA 3'-end directed cleavage 15-20 nucleotides away from the primer terminus.. The catalysed reaction is 3'-end directed exonucleolytic cleavage of viral RNA-DNA hybrid.. It carries out the reaction DNA(n) + a 2'-deoxyribonucleoside 5'-triphosphate = DNA(n+1) + diphosphate. With respect to regulation, protease: The viral protease is inhibited by many synthetic protease inhibitors (PIs), such as amprenavir, atazanavir, indinavir, loprinavir, nelfinavir, ritonavir and saquinavir. Use of protease inhibitors in tritherapy regimens permit more ambitious therapeutic strategies. Reverse transcriptase/ribonuclease H: RT can be inhibited either by nucleoside RT inhibitors (NRTIs) or by non nucleoside RT inhibitors (NNRTIs). NRTIs act as chain terminators, whereas NNRTIs inhibit DNA polymerization by binding a small hydrophobic pocket near the RT active site and inducing an allosteric change in this region. Classical NRTIs are abacavir, adefovir (PMEA), didanosine (ddI), lamivudine (3TC), stavudine (d4T), tenofovir (PMPA), zalcitabine (ddC), and zidovudine (AZT). Classical NNRTIs are atevirdine (BHAP U-87201E), delavirdine, efavirenz (DMP-266), emivirine (I-EBU), and nevirapine (BI-RG-587). The tritherapies used as a basic effective treatment of AIDS associate two NRTIs and one NNRTI. Mediates, with Gag polyprotein, the essential events in virion assembly, including binding the plasma membrane, making the protein-protein interactions necessary to create spherical particles, recruiting the viral Env proteins, and packaging the genomic RNA via direct interactions with the RNA packaging sequence (Psi). Gag-Pol polyprotein may regulate its own translation, by the binding genomic RNA in the 5'-UTR. At low concentration, the polyprotein would promote translation, whereas at high concentration, the polyprotein would encapsidate genomic RNA and then shut off translation. Its function is as follows. Targets the polyprotein to the plasma membrane via a multipartite membrane-binding signal, that includes its myristoylated N-terminus. Matrix protein is part of the pre-integration complex. Implicated in the release from host cell mediated by Vpu. Binds to RNA. In terms of biological role, forms the conical core that encapsulates the genomic RNA-nucleocapsid complex in the virion. Most core are conical, with only 7% tubular. The core is constituted by capsid protein hexamer subunits. The core is disassembled soon after virion entry. Host restriction factors such as TRIM5-alpha or TRIMCyp bind retroviral capsids and cause premature capsid disassembly, leading to blocks in reverse transcription. Capsid restriction by TRIM5 is one of the factors which restricts HIV-1 to the human species. Host PIN1 apparently facilitates the virion uncoating. On the other hand, interactions with PDZD8 or CYPA stabilize the capsid. Functionally, encapsulates and protects viral dimeric unspliced genomic RNA (gRNA). Binds these RNAs through its zinc fingers. Acts as a nucleic acid chaperone which is involved in rearangement of nucleic acid secondary structure during gRNA retrotranscription. Also facilitates template switch leading to recombination. As part of the polyprotein, participates in gRNA dimerization, packaging, tRNA incorporation and virion assembly. Aspartyl protease that mediates proteolytic cleavages of Gag and Gag-Pol polyproteins during or shortly after the release of the virion from the plasma membrane. Cleavages take place as an ordered, step-wise cascade to yield mature proteins. This process is called maturation. Displays maximal activity during the budding process just prior to particle release from the cell. Also cleaves Nef and Vif, probably concomitantly with viral structural proteins on maturation of virus particles. Hydrolyzes host EIF4GI and PABP1 in order to shut off the capped cellular mRNA translation. The resulting inhibition of cellular protein synthesis serves to ensure maximal viral gene expression and to evade host immune response. Also mediates cleavage of host YTHDF3. Mediates cleavage of host CARD8, thereby activating the CARD8 inflammasome, leading to the clearance of latent HIV-1 in patient CD4(+) T-cells after viral reactivation; in contrast, HIV-1 can evade CARD8-sensing when its protease remains inactive in infected cells prior to viral budding. Its function is as follows. Multifunctional enzyme that converts the viral RNA genome into dsDNA in the cytoplasm, shortly after virus entry into the cell. This enzyme displays a DNA polymerase activity that can copy either DNA or RNA templates, and a ribonuclease H (RNase H) activity that cleaves the RNA strand of RNA-DNA heteroduplexes in a partially processive 3' to 5' endonucleasic mode. Conversion of viral genomic RNA into dsDNA requires many steps. A tRNA(3)-Lys binds to the primer-binding site (PBS) situated at the 5'-end of the viral RNA. RT uses the 3' end of the tRNA primer to perform a short round of RNA-dependent minus-strand DNA synthesis. The reading proceeds through the U5 region and ends after the repeated (R) region which is present at both ends of viral RNA. The portion of the RNA-DNA heteroduplex is digested by the RNase H, resulting in a ssDNA product attached to the tRNA primer. This ssDNA/tRNA hybridizes with the identical R region situated at the 3' end of viral RNA. This template exchange, known as minus-strand DNA strong stop transfer, can be either intra- or intermolecular. RT uses the 3' end of this newly synthesized short ssDNA to perform the RNA-dependent minus-strand DNA synthesis of the whole template. RNase H digests the RNA template except for two polypurine tracts (PPTs) situated at the 5'-end and near the center of the genome. It is not clear if both polymerase and RNase H activities are simultaneous. RNase H probably can proceed both in a polymerase-dependent (RNA cut into small fragments by the same RT performing DNA synthesis) and a polymerase-independent mode (cleavage of remaining RNA fragments by free RTs). Secondly, RT performs DNA-directed plus-strand DNA synthesis using the PPTs that have not been removed by RNase H as primers. PPTs and tRNA primers are then removed by RNase H. The 3' and 5' ssDNA PBS regions hybridize to form a circular dsDNA intermediate. Strand displacement synthesis by RT to the PBS and PPT ends produces a blunt ended, linear dsDNA copy of the viral genome that includes long terminal repeats (LTRs) at both ends. In terms of biological role, catalyzes viral DNA integration into the host chromosome, by performing a series of DNA cutting and joining reactions. This enzyme activity takes place after virion entry into a cell and reverse transcription of the RNA genome in dsDNA. The first step in the integration process is 3' processing. This step requires a complex comprising the viral genome, matrix protein, Vpr and integrase. This complex is called the pre-integration complex (PIC). The integrase protein removes 2 nucleotides from each 3' end of the viral DNA, leaving recessed CA OH's at the 3' ends. In the second step, the PIC enters cell nucleus. This process is mediated through integrase and Vpr proteins, and allows the virus to infect a non dividing cell. This ability to enter the nucleus is specific of lentiviruses, other retroviruses cannot and rely on cell division to access cell chromosomes. In the third step, termed strand transfer, the integrase protein joins the previously processed 3' ends to the 5' ends of strands of target cellular DNA at the site of integration. The 5'-ends are produced by integrase-catalyzed staggered cuts, 5 bp apart. A Y-shaped, gapped, recombination intermediate results, with the 5'-ends of the viral DNA strands and the 3' ends of target DNA strands remaining unjoined, flanking a gap of 5 bp. The last step is viral DNA integration into host chromosome. This involves host DNA repair synthesis in which the 5 bp gaps between the unjoined strands are filled in and then ligated. Since this process occurs at both cuts flanking the HIV genome, a 5 bp duplication of host DNA is produced at the ends of HIV-1 integration. Alternatively, Integrase may catalyze the excision of viral DNA just after strand transfer, this is termed disintegration. The sequence is that of Gag-Pol polyprotein (gag-pol) from Human immunodeficiency virus type 1 group M subtype B (isolate MN) (HIV-1).